We begin with the raw amino-acid sequence, 124 residues long: Small ribosomal subunit protein uS12 (124 aa).

Aspartate 89 bears the 3-methylthioaspartic acid mark.

Belongs to the universal ribosomal protein uS12 family. As to quaternary structure, part of the 30S ribosomal subunit. Contacts proteins S8 and S17. May interact with IF1 in the 30S initiation complex.

Its function is as follows. With S4 and S5 plays an important role in translational accuracy. Functionally, interacts with and stabilizes bases of the 16S rRNA that are involved in tRNA selection in the A site and with the mRNA backbone. Located at the interface of the 30S and 50S subunits, it traverses the body of the 30S subunit contacting proteins on the other side and probably holding the rRNA structure together. The combined cluster of proteins S8, S12 and S17 appears to hold together the shoulder and platform of the 30S subunit. The chain is Small ribosomal subunit protein uS12 from Haemophilus ducreyi (strain 35000HP / ATCC 700724).